The chain runs to 733 residues: Cell division cycle protein 48 homolog AF_1297 (733 aa).

ATP is bound by residues 223–230 (GPPGTGKT) and 496–503 (GPPGTGKT).

It belongs to the AAA ATPase family. CDC48 subfamily.

The sequence is that of Cell division cycle protein 48 homolog AF_1297 from Archaeoglobus fulgidus (strain ATCC 49558 / DSM 4304 / JCM 9628 / NBRC 100126 / VC-16).